Here is a 134-residue protein sequence, read N- to C-terminus: Profilin-3 (134 aa).

Cys13 and Cys118 are oxidised to a cystine. Residues Ala84 to Thr100 carry the Involved in PIP2 interaction motif. A Phosphothreonine modification is found at Thr114.

This sequence belongs to the profilin family. In terms of assembly, occurs in many kinds of cells as a complex with monomeric actin in a 1:1 ratio. Phosphorylated by MAP kinases.

The protein localises to the cytoplasm. The protein resides in the cytoskeleton. In terms of biological role, binds to actin and affects the structure of the cytoskeleton. At high concentrations, profilin prevents the polymerization of actin, whereas it enhances it at low concentrations. The chain is Profilin-3 from Olea europaea (Common olive).